A 204-amino-acid chain; its full sequence is LexA repressor (204 aa).

The H-T-H motif DNA-binding region spans 27-47 (VREIGEAVGLASSSTVHGHLA). Active-site for autocatalytic cleavage activity residues include Ser-126 and Lys-164.

This sequence belongs to the peptidase S24 family. Homodimer.

It carries out the reaction Hydrolysis of Ala-|-Gly bond in repressor LexA.. Represses a number of genes involved in the response to DNA damage (SOS response), including recA and lexA. In the presence of single-stranded DNA, RecA interacts with LexA causing an autocatalytic cleavage which disrupts the DNA-binding part of LexA, leading to derepression of the SOS regulon and eventually DNA repair. This Listeria innocua serovar 6a (strain ATCC BAA-680 / CLIP 11262) protein is LexA repressor.